The chain runs to 360 residues: MFVARSIAADHKDLIHDVSFDFHGRRMATCSSDQSVKVWDKSENGDWHCTASWKTHSGSVWRVTWAHPEFGQVLASCSFDRTAAVWEEIVGESNDKLRGQSHWVKRTTLVDSRTSVTDVKFAPKHMGLMLATCSADGVVRIYEAPDVMNLSQWSLQHEISCKLSCSCISWNPSSSRAHSPMIAVGSDDSSPNIMGKVQIYEYNENTRKYAKAETLMSVSDPVHDIAFAPNLGRSFHILAVATKDVRIFTMKPLRKELSSSGGVTKFEIHTVAQFDNHNSQVWRVSWNITGTVLASSGDDGTVRLWKANYMDNWKCIGVLKGDGNPVGNSCQGIFGSSVGSAIQSLQNSVNGTSSSGRKHS.

WD repeat units lie at residues aspartate 10–cysteine 49, threonine 55–lysine 96, aspartate 111–glutamine 152, serine 160–alanine 210, serine 217–serine 258, and asparagine 276–cysteine 315.

Belongs to the WD repeat SEC13 family. Component of the Nup107-160 subcomplex of the nuclear pore complex (NPC). The Nup107-160 subcomplex includes NUP160, NUP133, NUP107, NUP98, NUP85, NUP43, NUP37, SEH1 and SEC13. Component of the GATOR2 subcomplex, composed of MIOS, SEC13, SEH1L, WDR24 and WDR59. The GATOR2 complex interacts with CASTOR1 and CASTOR2; the interaction is negatively regulated by arginine. The GATOR2 complex interacts with SESN1, SESN2 and SESN3; the interaction is negatively regulated by amino acids.

Its subcellular location is the chromosome. The protein localises to the centromere. The protein resides in the kinetochore. It localises to the nucleus. It is found in the nuclear pore complex. Its subcellular location is the lysosome membrane. The GATOR2 complex is negatively regulated by the upstream amino acid sensors CASTOR1 and SESN2, which sequester the GATOR2 complex in absence of amino acids. In the presence of abundant amino acids, GATOR2 is released from CASTOR1 and SESN2 and activated. Functionally, component of the Nup107-160 subcomplex of the nuclear pore complex (NPC). The Nup107-160 subcomplex is required for the assembly of a functional NPC. The Nup107-160 subcomplex is also required for normal kinetochore microtubule attachment, mitotic progression and chromosome segregation. This subunit plays a role in recruitment of the Nup107-160 subcomplex to the kinetochore. Its function is as follows. As a component of the GATOR2 complex, functions as an activator of the amino acid-sensing branch of the mTORC1 signaling pathway. The GATOR2 complex indirectly activates mTORC1 through the inhibition of the GATOR1 subcomplex. GATOR2 probably acts as an E3 ubiquitin-protein ligase toward GATOR1. In the presence of abundant amino acids, the GATOR2 complex mediates ubiquitination of the NPRL2 core component of the GATOR1 complex, leading to GATOR1 inactivation. In the absence of amino acids, GATOR2 is inhibited, activating the GATOR1 complex. The protein is Nucleoporin SEH1 (seh1l) of Xenopus tropicalis (Western clawed frog).